A 105-amino-acid chain; its full sequence is Met repressor (105 aa).

Belongs to the MetJ family. Homodimer.

It localises to the cytoplasm. In terms of biological role, this regulatory protein, when combined with SAM (S-adenosylmethionine) represses the expression of the methionine regulon and of enzymes involved in SAM synthesis. This chain is Met repressor, found in Haemophilus influenzae (strain PittEE).